The sequence spans 119 residues: Hydrogenase maturation factor HypA (119 aa).

H2 lines the Ni(2+) pocket. Zn(2+) contacts are provided by C73, C76, C89, and C92.

Belongs to the HypA/HybF family.

In terms of biological role, involved in the maturation of [NiFe] hydrogenases. Required for nickel insertion into the metal center of the hydrogenase. In Dehalococcoides mccartyi (strain ATCC BAA-2100 / JCM 16839 / KCTC 5957 / BAV1), this protein is Hydrogenase maturation factor HypA.